The following is a 611-amino-acid chain: Actin-related protein 5 (611 aa).

Coiled-coil stretches lie at residues 290-329 and 355-386; these read TLTSEEKQERRQQQLRRLQELNARRREEKLQLDQERLDRL and SAEELQSYINKLSLAIEQTKQKILQAEVNIEV.

The protein belongs to the actin family. ARP5 subfamily. As to quaternary structure, component of the chromatin remodeling INO80 complex.

It is found in the nucleus. Functionally, proposed core component of the chromatin remodeling INO80 complex which is involved in transcriptional regulation, DNA replication and probably DNA repair. The sequence is that of Actin-related protein 5 (ACTR5) from Gallus gallus (Chicken).